The sequence spans 241 residues: Zinc finger CCHC domain-containing protein 24 (241 aa).

Phosphoserine occurs at positions 65 and 93. The segment at 132 to 149 adopts a CCHC-type zinc-finger fold; it reads YLCHLCFNKGHYIKDCPQ.

The chain is Zinc finger CCHC domain-containing protein 24 (ZCCHC24) from Macaca fascicularis (Crab-eating macaque).